The primary structure comprises 242 residues: uncharacterized protein (242 aa).

S-adenosyl-L-methionine is bound by residues glycine 198, isoleucine 218, and leucine 227.

Belongs to the class IV-like SAM-binding methyltransferase superfamily. RNA methyltransferase TrmH family.

This is an uncharacterized protein from Mycoplasma pneumoniae (strain ATCC 29342 / M129 / Subtype 1) (Mycoplasmoides pneumoniae).